Here is a 171-residue protein sequence, read N- to C-terminus: Regulatory protein RecX (171 aa).

Belongs to the RecX family.

The protein localises to the cytoplasm. Functionally, modulates RecA activity. The polypeptide is Regulatory protein RecX (Mycobacterium leprae (strain Br4923)).